Reading from the N-terminus, the 458-residue chain is UDP-N-acetylmuramoylalanine--D-glutamate ligase (458 aa).

124–130 contributes to the ATP binding site; sequence GSDGKTT.

The protein belongs to the MurCDEF family.

Its subcellular location is the cytoplasm. The enzyme catalyses UDP-N-acetyl-alpha-D-muramoyl-L-alanine + D-glutamate + ATP = UDP-N-acetyl-alpha-D-muramoyl-L-alanyl-D-glutamate + ADP + phosphate + H(+). Its pathway is cell wall biogenesis; peptidoglycan biosynthesis. Its function is as follows. Cell wall formation. Catalyzes the addition of glutamate to the nucleotide precursor UDP-N-acetylmuramoyl-L-alanine (UMA). This Clostridium novyi (strain NT) protein is UDP-N-acetylmuramoylalanine--D-glutamate ligase.